Reading from the N-terminus, the 466-residue chain is 3-isopropylmalate dehydratase large subunit (466 aa).

[4Fe-4S] cluster-binding residues include cysteine 347, cysteine 407, and cysteine 410.

The protein belongs to the aconitase/IPM isomerase family. LeuC type 1 subfamily. Heterodimer of LeuC and LeuD. Requires [4Fe-4S] cluster as cofactor.

The catalysed reaction is (2R,3S)-3-isopropylmalate = (2S)-2-isopropylmalate. The protein operates within amino-acid biosynthesis; L-leucine biosynthesis; L-leucine from 3-methyl-2-oxobutanoate: step 2/4. Catalyzes the isomerization between 2-isopropylmalate and 3-isopropylmalate, via the formation of 2-isopropylmaleate. This is 3-isopropylmalate dehydratase large subunit from Blochmanniella floridana.